We begin with the raw amino-acid sequence, 313 residues long: Protoheme IX farnesyltransferase (313 aa).

9 consecutive transmembrane segments (helical) span residues 29-49, 57-77, 101-123, 124-144, 157-177, 185-205, 225-245, 247-267, and 287-307; these read VISL…RGWP, LWLL…AGVF, LISS…VMLW, VWGT…YVVI, IVIG…AVTG, YLFA…ALMI, MTVA…LMPV, FGAV…WLLW, and AVPL…AGAI.

Belongs to the UbiA prenyltransferase family. Protoheme IX farnesyltransferase subfamily.

It localises to the cell membrane. The enzyme catalyses heme b + (2E,6E)-farnesyl diphosphate + H2O = Fe(II)-heme o + diphosphate. Its pathway is porphyrin-containing compound metabolism; heme O biosynthesis; heme O from protoheme: step 1/1. In terms of biological role, converts heme B (protoheme IX) to heme O by substitution of the vinyl group on carbon 2 of heme B porphyrin ring with a hydroxyethyl farnesyl side group. The protein is Protoheme IX farnesyltransferase of Deinococcus radiodurans (strain ATCC 13939 / DSM 20539 / JCM 16871 / CCUG 27074 / LMG 4051 / NBRC 15346 / NCIMB 9279 / VKM B-1422 / R1).